A 434-amino-acid chain; its full sequence is Glutamate-1-semialdehyde 2,1-aminomutase (434 aa).

K271 bears the N6-(pyridoxal phosphate)lysine mark.

This sequence belongs to the class-III pyridoxal-phosphate-dependent aminotransferase family. HemL subfamily. As to quaternary structure, homodimer. Pyridoxal 5'-phosphate is required as a cofactor.

It is found in the cytoplasm. It catalyses the reaction (S)-4-amino-5-oxopentanoate = 5-aminolevulinate. The protein operates within porphyrin-containing compound metabolism; protoporphyrin-IX biosynthesis; 5-aminolevulinate from L-glutamyl-tRNA(Glu): step 2/2. It functions in the pathway porphyrin-containing compound metabolism; chlorophyll biosynthesis. This Prochlorococcus marinus (strain MIT 9312) protein is Glutamate-1-semialdehyde 2,1-aminomutase.